The primary structure comprises 184 residues: MSDIIKDTKSRMQKSIDNLSRELANISAGRANSNLLNGVTVDYYGAPTPVQQLASINVPEARLLVISPYDKSSVADIEKAIIAANLGVNPTSDGEVIRISVPALTEERRKELVKEVKKIGEDAKVSIRNIRRDINDQLKKDEKNGDITEDDLRSQTDDVQKATDNSIKEIDQLVADKEKDIMSV.

The interval 141–165 (DEKNGDITEDDLRSQTDDVQKATDN) is disordered.

Belongs to the RRF family.

It is found in the cytoplasm. In terms of biological role, responsible for the release of ribosomes from messenger RNA at the termination of protein biosynthesis. May increase the efficiency of translation by recycling ribosomes from one round of translation to another. The protein is Ribosome-recycling factor of Staphylococcus epidermidis (strain ATCC 35984 / DSM 28319 / BCRC 17069 / CCUG 31568 / BM 3577 / RP62A).